The chain runs to 281 residues: Phosphatidylglycerol--prolipoprotein diacylglyceryl transferase (281 aa).

The next 4 membrane-spanning stretches (helical) occupy residues 23-43 (VGPL…MFAW), 71-91 (FVIW…VLFY), 107-127 (WDGG…MILF), and 133-153 (IKVW…LGVV). Arg-154 is a binding site for a 1,2-diacyl-sn-glycero-3-phospho-(1'-sn-glycerol). The next 3 membrane-spanning stretches (helical) occupy residues 189-209 (LYEA…LVWV), 217-237 (GFIA…VEFF), and 247-267 (LFGG…LIGL).

This sequence belongs to the Lgt family.

It localises to the cell inner membrane. It carries out the reaction L-cysteinyl-[prolipoprotein] + a 1,2-diacyl-sn-glycero-3-phospho-(1'-sn-glycerol) = an S-1,2-diacyl-sn-glyceryl-L-cysteinyl-[prolipoprotein] + sn-glycerol 1-phosphate + H(+). Its pathway is protein modification; lipoprotein biosynthesis (diacylglyceryl transfer). In terms of biological role, catalyzes the transfer of the diacylglyceryl group from phosphatidylglycerol to the sulfhydryl group of the N-terminal cysteine of a prolipoprotein, the first step in the formation of mature lipoproteins. In Brucella anthropi (strain ATCC 49188 / DSM 6882 / CCUG 24695 / JCM 21032 / LMG 3331 / NBRC 15819 / NCTC 12168 / Alc 37) (Ochrobactrum anthropi), this protein is Phosphatidylglycerol--prolipoprotein diacylglyceryl transferase.